The primary structure comprises 734 residues: Probable inactive histone-lysine N-methyltransferase SUVR1 (734 aa).

The tract at residues Gln-61–Arg-163 is disordered. Positions Ser-62–Ser-81 are enriched in basic and acidic residues. Over residues Val-98–Glu-109 the composition is skewed to acidic residues. The segment covering Lys-113–Arg-122 has biased composition (basic residues). Over residues Ala-123–Ser-132 the composition is skewed to low complexity. 8 residues coordinate Zn(2+): Cys-460, Cys-464, Cys-468, Cys-477, Cys-545, Cys-549, Cys-551, and Cys-555. A Pre-SET domain is found at Cys-460–Gly-563. Residues Asn-566–Gly-696 enclose the SET domain. S-adenosyl-L-methionine is bound by residues Lys-577–Trp-579 and Asn-652–His-653. Cys-655 contributes to the Zn(2+) binding site. Tyr-695 provides a ligand contact to S-adenosyl-L-methionine. Positions Lys-707–Arg-723 constitute a Post-SET domain. Zn(2+) is bound by residues Cys-711, Cys-713, and Cys-718.

The protein belongs to the class V-like SAM-binding methyltransferase superfamily. Histone-lysine methyltransferase family. In terms of assembly, interacts with SUVR2 and itself.

Its subcellular location is the nucleus. The protein resides in the chromosome. Functionally, probable inactive histone-lysine methyltransferase that acts as regulator of transctiptional gene silencing independently of histone H3K9 methylation. Contributes to transcriptional gene silencing at RNA-directed DNA methylation (RdDM) target loci but also at RdDM-independent target loci. This is Probable inactive histone-lysine N-methyltransferase SUVR1 (SUVR1) from Arabidopsis thaliana (Mouse-ear cress).